The chain runs to 229 residues: MAKLTKKMKAIKAGVDSTKAYEINEAIAVLKQFATAKFVESVDVAVNLGIDPRKSDQNVRGATVLPHGTGRTARVAVFTQGANAEAAKAAGADLVGMEDLAEQIKKGEMNFDVVIASPDAMRVVGQLGQVLGPRGLMPNPKVGTVTPNVAEAVKNAKSGQIRYRNDKNGIIHTTIGKADFAPEQLKDNLVALLAALNKAKPTTAKGIFIKKVSISTTMGAGVAVDQASL.

This sequence belongs to the universal ribosomal protein uL1 family. As to quaternary structure, part of the 50S ribosomal subunit.

Binds directly to 23S rRNA. The L1 stalk is quite mobile in the ribosome, and is involved in E site tRNA release. Its function is as follows. Protein L1 is also a translational repressor protein, it controls the translation of the L11 operon by binding to its mRNA. The chain is Large ribosomal subunit protein uL1 from Actinobacillus pleuropneumoniae serotype 5b (strain L20).